The sequence spans 215 residues: Protein-L-isoaspartate O-methyltransferase (215 aa).

Ser-62 is an active-site residue.

The protein belongs to the methyltransferase superfamily. L-isoaspartyl/D-aspartyl protein methyltransferase family.

The protein resides in the cytoplasm. It catalyses the reaction [protein]-L-isoaspartate + S-adenosyl-L-methionine = [protein]-L-isoaspartate alpha-methyl ester + S-adenosyl-L-homocysteine. In terms of biological role, catalyzes the methyl esterification of L-isoaspartyl residues in peptides and proteins that result from spontaneous decomposition of normal L-aspartyl and L-asparaginyl residues. It plays a role in the repair and/or degradation of damaged proteins. The polypeptide is Protein-L-isoaspartate O-methyltransferase (Ruegeria sp. (strain TM1040) (Silicibacter sp.)).